The chain runs to 117 residues: UPF0342 protein BcerKBAB4_0767 (117 aa).

It belongs to the UPF0342 family.

This chain is UPF0342 protein BcerKBAB4_0767, found in Bacillus mycoides (strain KBAB4) (Bacillus weihenstephanensis).